The sequence spans 120 residues: Protein EPIDERMAL PATTERNING FACTOR 2 (120 aa).

The signal sequence occupies residues 1–25 (MTKFVRKYMFCLVLVFAACSLVVNS). Disulfide bonds link Cys76-Cys107, Cys80-Cys86, Cys83-Cys109, and Cys95-Cys101.

It belongs to the plant cysteine rich small secretory peptide family. Epidermal patterning factor subfamily. As to quaternary structure, interacts with ERECTA, ERL1 and TMM. Expressed in leaves, especially by the MMCs and their early descendants cells (stomatal lineage cells) including guard mother cells (GMCs).

The protein localises to the secreted. In terms of biological role, controls stomatal patterning. Regulates the number of cells that enter, and remain in, the stomatal lineage by inhibiting protodermal cells from adopting the meristemoid mother cell (MMC) fate in a non-cell-autonomous manner. Mediates stomatal development inhibition. MEPF2: mobile signal controlling stomatal development in a non-cell-autonomous manner. Uses ERECTA as major receptor. Inactivated by cleavage by CRSP (AC Q9LNU1). May act by competing with somatogen (AC Q9SV72) for the same receptor, TMM (AC Q9SSD1). The protein is Protein EPIDERMAL PATTERNING FACTOR 2 of Arabidopsis thaliana (Mouse-ear cress).